The primary structure comprises 355 residues: Zinc finger protein CONSTANS-LIKE 5 (355 aa).

Zn(2+) contacts are provided by Cys-22, Cys-25, Cys-45, His-50, Cys-61, Cys-64, Cys-84, and His-89. The B box-type 1; atypical zinc finger occupies 22–60 (CDACKSVTAAVFCRVDSAFLCIACDTRIHSFTRHERVWV). Residues 61–103 (CEVCEQAPAAVTCKADAAALCVSCDADIHSANPLASRHERVPV) form a B box-type 2; atypical zinc finger. One can recognise a CCT domain in the interval 285-327 (REARVLRYREKRKNRKFEKTIRYASRKAYAESRPRIKGRFAKR).

It belongs to the CONSTANS family.

The protein localises to the nucleus. The chain is Zinc finger protein CONSTANS-LIKE 5 (COL5) from Arabidopsis thaliana (Mouse-ear cress).